We begin with the raw amino-acid sequence, 450 residues long: 3-phosphoshikimate 1-carboxyvinyltransferase (450 aa).

3-phosphoshikimate contacts are provided by lysine 28, serine 29, and arginine 33. Residue lysine 28 coordinates phosphoenolpyruvate. Glycine 100 and arginine 128 together coordinate phosphoenolpyruvate. 3-phosphoshikimate contacts are provided by serine 173, glutamine 175, aspartate 326, and lysine 353. Glutamine 175 is a binding site for phosphoenolpyruvate. Aspartate 326 functions as the Proton acceptor in the catalytic mechanism. Phosphoenolpyruvate contacts are provided by arginine 357 and arginine 402.

The protein belongs to the EPSP synthase family. In terms of assembly, monomer.

It localises to the cytoplasm. It catalyses the reaction 3-phosphoshikimate + phosphoenolpyruvate = 5-O-(1-carboxyvinyl)-3-phosphoshikimate + phosphate. Its pathway is metabolic intermediate biosynthesis; chorismate biosynthesis; chorismate from D-erythrose 4-phosphate and phosphoenolpyruvate: step 6/7. Catalyzes the transfer of the enolpyruvyl moiety of phosphoenolpyruvate (PEP) to the 5-hydroxyl of shikimate-3-phosphate (S3P) to produce enolpyruvyl shikimate-3-phosphate and inorganic phosphate. In Brucella canis (strain ATCC 23365 / NCTC 10854 / RM-666), this protein is 3-phosphoshikimate 1-carboxyvinyltransferase.